Here is a 243-residue protein sequence, read N- to C-terminus: Ubiquinone/menaquinone biosynthesis C-methyltransferase UbiE (243 aa).

S-adenosyl-L-methionine is bound by residues Thr-69, Asp-90, and 116–117 (DA).

It belongs to the class I-like SAM-binding methyltransferase superfamily. MenG/UbiE family.

It catalyses the reaction a 2-demethylmenaquinol + S-adenosyl-L-methionine = a menaquinol + S-adenosyl-L-homocysteine + H(+). The enzyme catalyses a 2-methoxy-6-(all-trans-polyprenyl)benzene-1,4-diol + S-adenosyl-L-methionine = a 5-methoxy-2-methyl-3-(all-trans-polyprenyl)benzene-1,4-diol + S-adenosyl-L-homocysteine + H(+). It participates in quinol/quinone metabolism; menaquinone biosynthesis; menaquinol from 1,4-dihydroxy-2-naphthoate: step 2/2. Its pathway is cofactor biosynthesis; ubiquinone biosynthesis. Functionally, methyltransferase required for the conversion of demethylmenaquinol (DMKH2) to menaquinol (MKH2) and the conversion of 2-polyprenyl-6-methoxy-1,4-benzoquinol (DDMQH2) to 2-polyprenyl-3-methyl-6-methoxy-1,4-benzoquinol (DMQH2). The sequence is that of Ubiquinone/menaquinone biosynthesis C-methyltransferase UbiE from Cupriavidus metallidurans (strain ATCC 43123 / DSM 2839 / NBRC 102507 / CH34) (Ralstonia metallidurans).